A 166-amino-acid polypeptide reads, in one-letter code: NADH-quinone oxidoreductase subunit B (166 aa).

[4Fe-4S] cluster contacts are provided by Cys-44, Cys-45, Cys-110, and Cys-140.

This sequence belongs to the complex I 20 kDa subunit family. As to quaternary structure, NDH-1 is composed of 14 different subunits. Subunits NuoB, C, D, E, F, and G constitute the peripheral sector of the complex. [4Fe-4S] cluster is required as a cofactor.

Its subcellular location is the cell membrane. The enzyme catalyses a quinone + NADH + 5 H(+)(in) = a quinol + NAD(+) + 4 H(+)(out). Its function is as follows. NDH-1 shuttles electrons from NADH, via FMN and iron-sulfur (Fe-S) centers, to quinones in the respiratory chain. The immediate electron acceptor for the enzyme in this species is believed to be a menaquinone. Couples the redox reaction to proton translocation (for every two electrons transferred, four hydrogen ions are translocated across the cytoplasmic membrane), and thus conserves the redox energy in a proton gradient. The protein is NADH-quinone oxidoreductase subunit B of Carboxydothermus hydrogenoformans (strain ATCC BAA-161 / DSM 6008 / Z-2901).